The following is a 180-amino-acid chain: Regulator of G-protein signaling 8 (180 aa).

Ser26 is subject to Phosphoserine. Positions 56-171 (SFDVLLSHKY…FLRSKMYLDL (116 aa)) constitute an RGS domain.

Interacts with GNAO1 and GNAI3.

The protein localises to the cell membrane. It is found in the membrane. It localises to the perikaryon. Its subcellular location is the cell projection. The protein resides in the dendrite. The protein localises to the nucleus. Regulates G protein-coupled receptor signaling cascades, including signaling via muscarinic acetylcholine receptor CHRM2 and dopamine receptor DRD2. Inhibits signal transduction by increasing the GTPase activity of G protein alpha subunits, thereby driving them into their inactive GDP-bound form. Modulates the activity of potassium channels that are activated in response to DRD2 and CHRM2 signaling. This is Regulator of G-protein signaling 8 (Rgs8) from Mus musculus (Mouse).